A 608-amino-acid chain; its full sequence is Isoprene synthase, chloroplastic (608 aa).

Residues 1 to 45 (MATNLLCLSNKLSSPTPTPSTRFPQSKNFITQKTSLANPKPWRVI) constitute a chloroplast transit peptide. Asp-350 is a binding site for dimethylallyl diphosphate. Residues Asp-350 and Asp-354 each contribute to the Mg(2+) site. Residues 350 to 354 (DDVYD) carry the DDXXD motif motif. Residues Glu-428, Arg-494, and Asn-497 each contribute to the dimethylallyl diphosphate site. Asn-497, Thr-501, and Glu-505 together coordinate Mg(2+).

It belongs to the terpene synthase family. Tpsb subfamily. It depends on Mg(2+) as a cofactor. Requires Mn(2+) as cofactor.

It is found in the plastid. Its subcellular location is the chloroplast. It catalyses the reaction dimethylallyl diphosphate = isoprene + diphosphate. Functionally, lyase that catalyzes the formation of isoprene from dimethylallyl diphosphate. This Pueraria montana var. lobata (Kudzu vine) protein is Isoprene synthase, chloroplastic (ISPS).